A 144-amino-acid polypeptide reads, in one-letter code: Arsenate reductase ArsI1 (144 aa).

Residue Cys14 is the Nucleophile; cysteine thioarsenate intermediate of the active site.

The protein belongs to the ArsC family.

It catalyses the reaction [glutaredoxin]-dithiol + arsenate + glutathione + H(+) = glutathionyl-S-S-[glutaredoxin] + arsenite + H2O. In terms of biological role, catalyzes the reduction of arsenate [As(V)] to arsenite [As(III)]. Does not constitute the major arsenate reductase in cells: essential only in the absence of ArsC (AC P74313). In Synechocystis sp. (strain ATCC 27184 / PCC 6803 / Kazusa), this protein is Arsenate reductase ArsI1.